A 393-amino-acid polypeptide reads, in one-letter code: Prokineticin receptor 1 (393 aa).

Topologically, residues 1-62 are extracellular; it reads METTVGTLGE…TNSRTFFAAK (62 aa). Asparagine 11 carries N-linked (GlcNAc...) asparagine glycosylation. The chain crosses the membrane as a helical span at residues 63 to 83; that stretch reads IVIGMALVGIMLVCGIGNFIF. At 84-98 the chain is on the cytoplasmic side; the sequence is ITALARYKKLRNLTN. A helical membrane pass occupies residues 99–119; it reads LLIANLAISDFLVAIVCCPFE. Over 120-145 the chain is Extracellular; that stretch reads MDYYVVRQLSWEHGHVLCASVNYLRT. Cysteine 137 and cysteine 217 are disulfide-bonded. Residues 146 to 166 form a helical membrane-spanning segment; it reads VSLYVSTNALLAIAIDRYLAI. Residues 167 to 179 are Cytoplasmic-facing; sequence VHPLRPRMKCQTA. A helical transmembrane segment spans residues 180 to 200; that stretch reads AGLIFLVWSVSILIAIPAAYF. The Extracellular portion of the chain corresponds to 201 to 232; it reads TTETVLVIVESQEKIFCGQIWPVDQQFYYRSY. A helical membrane pass occupies residues 233 to 253; the sequence is FLLVFGLEFVGPVIAMTLCYA. Over 254–282 the chain is Cytoplasmic; it reads RVSRELWFKAVPGFQTEQIRRRLRCRRRT. The helical transmembrane segment at 283–303 threads the bilayer; it reads VLGLVCVLSAYVLCWAPFYGF. The Extracellular segment spans residues 304–322; that stretch reads TIVRDFFPSVFVKEKHYLT. A helical transmembrane segment spans residues 323-343; the sequence is AFYVVECIAMSNSMINTLCFV. Residues 344-393 lie on the Cytoplasmic side of the membrane; sequence TVRNNTSKYLKRILRLQWRASPSGSKASADLDLRTTGIPATEEVDCIRLK.

Belongs to the G-protein coupled receptor 1 family. Widely expressed in peripheral tissues with the highest level in the spleen and moderate levels in the adipose tissues, thymus, lung, kidney, testis, uterus and small intestine.

The protein localises to the cell membrane. Its function is as follows. Receptor for prokineticin 1. Exclusively coupled to the G(q) subclass of heteromeric G proteins. Activation leads to mobilization of calcium, stimulation of phosphoinositide turnover and activation of p44/p42 mitogen-activated protein kinase. May play a role during early pregnancy. The protein is Prokineticin receptor 1 (Prokr1) of Rattus norvegicus (Rat).